Here is a 633-residue protein sequence, read N- to C-terminus: Glutamyl-tRNA(Gln) amidotransferase subunit E (633 aa).

Belongs to the GatB/GatE family. GatE subfamily. Heterodimer of GatD and GatE.

It catalyses the reaction L-glutamyl-tRNA(Gln) + L-glutamine + ATP + H2O = L-glutaminyl-tRNA(Gln) + L-glutamate + ADP + phosphate + H(+). Its function is as follows. Allows the formation of correctly charged Gln-tRNA(Gln) through the transamidation of misacylated Glu-tRNA(Gln) in organisms which lack glutaminyl-tRNA synthetase. The reaction takes place in the presence of glutamine and ATP through an activated gamma-phospho-Glu-tRNA(Gln). The GatDE system is specific for glutamate and does not act on aspartate. The chain is Glutamyl-tRNA(Gln) amidotransferase subunit E from Methanosarcina barkeri (strain Fusaro / DSM 804).